Reading from the N-terminus, the 378-residue chain is UDP-N-acetylglucosamine--N-acetylmuramyl-(pentapeptide) pyrophosphoryl-undecaprenol N-acetylglucosamine transferase (378 aa).

UDP-N-acetyl-alpha-D-glucosamine-binding positions include 24 to 26, Asn-144, Arg-181, Ser-215, and Gln-310; that span reads TAG.

The protein belongs to the glycosyltransferase 28 family. MurG subfamily.

It is found in the cell membrane. It catalyses the reaction di-trans,octa-cis-undecaprenyl diphospho-N-acetyl-alpha-D-muramoyl-L-alanyl-D-glutamyl-meso-2,6-diaminopimeloyl-D-alanyl-D-alanine + UDP-N-acetyl-alpha-D-glucosamine = di-trans,octa-cis-undecaprenyl diphospho-[N-acetyl-alpha-D-glucosaminyl-(1-&gt;4)]-N-acetyl-alpha-D-muramoyl-L-alanyl-D-glutamyl-meso-2,6-diaminopimeloyl-D-alanyl-D-alanine + UDP + H(+). Its pathway is cell wall biogenesis; peptidoglycan biosynthesis. Its function is as follows. Cell wall formation. Catalyzes the transfer of a GlcNAc subunit on undecaprenyl-pyrophosphoryl-MurNAc-pentapeptide (lipid intermediate I) to form undecaprenyl-pyrophosphoryl-MurNAc-(pentapeptide)GlcNAc (lipid intermediate II). This Nocardia farcinica (strain IFM 10152) protein is UDP-N-acetylglucosamine--N-acetylmuramyl-(pentapeptide) pyrophosphoryl-undecaprenol N-acetylglucosamine transferase.